The chain runs to 562 residues: Phosphomethylpyrimidine synthase (562 aa).

Residues N179, M208, Y237, H273, 293 to 295 (SRG), 334 to 337 (DGLR), and E373 each bind substrate. H377 is a Zn(2+) binding site. Y400 contacts substrate. H441 provides a ligand contact to Zn(2+). 3 residues coordinate [4Fe-4S] cluster: C521, C524, and C529.

The protein belongs to the ThiC family. It depends on [4Fe-4S] cluster as a cofactor.

It catalyses the reaction 5-amino-1-(5-phospho-beta-D-ribosyl)imidazole + S-adenosyl-L-methionine = 4-amino-2-methyl-5-(phosphooxymethyl)pyrimidine + CO + 5'-deoxyadenosine + formate + L-methionine + 3 H(+). It participates in cofactor biosynthesis; thiamine diphosphate biosynthesis. Catalyzes the synthesis of the hydroxymethylpyrimidine phosphate (HMP-P) moiety of thiamine from aminoimidazole ribotide (AIR) in a radical S-adenosyl-L-methionine (SAM)-dependent reaction. The chain is Phosphomethylpyrimidine synthase from Geobacillus kaustophilus (strain HTA426).